Reading from the N-terminus, the 209-residue chain is MARNLDPKCRQCRREGEKLFLKGEKCFTDKCAIERRSYAPGQHGQKSGARLSDYGVHLRAKQKIRRVYGVLEGQFRKTFAEADRRKGQTGENLLQLLEARLDSVAYRMGFGASRSESRQVVRHNGILVNGKRVNIPSFIVKPGDVVQLTDRARASLRCKAALEAAESRGFPEWISVDVKEGKGTFKAMPQRSELPATLNEGLVIELYSK.

An S4 RNA-binding domain is found at 99–160; it reads ARLDSVAYRM…RARASLRCKA (62 aa).

The protein belongs to the universal ribosomal protein uS4 family. Part of the 30S ribosomal subunit. Contacts protein S5. The interaction surface between S4 and S5 is involved in control of translational fidelity.

One of the primary rRNA binding proteins, it binds directly to 16S rRNA where it nucleates assembly of the body of the 30S subunit. Its function is as follows. With S5 and S12 plays an important role in translational accuracy. The protein is Small ribosomal subunit protein uS4 of Dechloromonas aromatica (strain RCB).